The chain runs to 354 residues: 4-hydroxy-2-oxovalerate aldolase 5 (354 aa).

Residues 11 to 263 (VTVHDMCLRD…ETGCDLFKLM (253 aa)) form the Pyruvate carboxyltransferase domain. Residue 19–20 (RD) coordinates substrate. D20 provides a ligand contact to Mn(2+). H23 acts as the Proton acceptor in catalysis. Residues S173 and H202 each contribute to the substrate site. Positions 202 and 204 each coordinate Mn(2+). Position 293 (Y293) interacts with substrate.

The protein belongs to the 4-hydroxy-2-oxovalerate aldolase family.

The enzyme catalyses (S)-4-hydroxy-2-oxopentanoate = acetaldehyde + pyruvate. This chain is 4-hydroxy-2-oxovalerate aldolase 5, found in Dechloromonas aromatica (strain RCB).